The primary structure comprises 1228 residues: DNA-directed RNA polymerase subunit beta (1228 aa).

The protein belongs to the RNA polymerase beta chain family. The RNAP catalytic core consists of 2 alpha, 1 beta, 1 beta' and 1 omega subunit. When a sigma factor is associated with the core the holoenzyme is formed, which can initiate transcription.

The catalysed reaction is RNA(n) + a ribonucleoside 5'-triphosphate = RNA(n+1) + diphosphate. Its function is as follows. DNA-dependent RNA polymerase catalyzes the transcription of DNA into RNA using the four ribonucleoside triphosphates as substrates. The sequence is that of DNA-directed RNA polymerase subunit beta from Leptospira biflexa.